A 33-amino-acid polypeptide reads, in one-letter code: MSDIN-like toxin proprotein 2 (33 aa).

Residues 1 to 10 (MSDINATRLP) constitute a propeptide that is removed on maturation. The cyclopeptide (Ile-Pro) cross-link spans 11–18 (IILAPIIP). A propeptide spanning residues 19-33 (CINDDVNSTLTSGER) is cleaved from the precursor.

Belongs to the MSDIN fungal toxin family. In terms of processing, processed by the macrocyclase-peptidase enzyme POPB to yield a toxic cyclic octapeptide. POPB first removes 10 residues from the N-terminus. Conformational trapping of the remaining peptide forces the enzyme to release this intermediate rather than proceed to macrocyclization. The enzyme rebinds the remaining peptide in a different conformation and catalyzes macrocyclization of the N-terminal 8 residues.

In terms of biological role, probable toxin that belongs to the MSDIN-like toxin family responsible for a large number of food poisoning cases and deaths. The protein is MSDIN-like toxin proprotein 2 of Amanita phalloides (Death cap).